Here is a 257-residue protein sequence, read N- to C-terminus: Acyl-[acyl-carrier-protein]--UDP-N-acetylglucosamine O-acyltransferase (257 aa).

It belongs to the transferase hexapeptide repeat family. LpxA subfamily. In terms of assembly, homotrimer.

Its subcellular location is the cytoplasm. It catalyses the reaction a (3R)-hydroxyacyl-[ACP] + UDP-N-acetyl-alpha-D-glucosamine = a UDP-3-O-[(3R)-3-hydroxyacyl]-N-acetyl-alpha-D-glucosamine + holo-[ACP]. Its pathway is glycolipid biosynthesis; lipid IV(A) biosynthesis; lipid IV(A) from (3R)-3-hydroxytetradecanoyl-[acyl-carrier-protein] and UDP-N-acetyl-alpha-D-glucosamine: step 1/6. Involved in the biosynthesis of lipid A, a phosphorylated glycolipid that anchors the lipopolysaccharide to the outer membrane of the cell. The sequence is that of Acyl-[acyl-carrier-protein]--UDP-N-acetylglucosamine O-acyltransferase from Anaeromyxobacter sp. (strain Fw109-5).